The primary structure comprises 227 residues: Cytidylate kinase (227 aa).

Residue 12–20 (GPSGAGKGT) coordinates ATP.

It belongs to the cytidylate kinase family. Type 1 subfamily.

Its subcellular location is the cytoplasm. The catalysed reaction is CMP + ATP = CDP + ADP. The enzyme catalyses dCMP + ATP = dCDP + ADP. The chain is Cytidylate kinase from Salmonella paratyphi A (strain ATCC 9150 / SARB42).